A 222-amino-acid chain; its full sequence is 2-C-methyl-D-erythritol 4-phosphate cytidylyltransferase (222 aa).

This sequence belongs to the IspD/TarI cytidylyltransferase family. IspD subfamily.

The enzyme catalyses 2-C-methyl-D-erythritol 4-phosphate + CTP + H(+) = 4-CDP-2-C-methyl-D-erythritol + diphosphate. The protein operates within isoprenoid biosynthesis; isopentenyl diphosphate biosynthesis via DXP pathway; isopentenyl diphosphate from 1-deoxy-D-xylulose 5-phosphate: step 2/6. Catalyzes the formation of 4-diphosphocytidyl-2-C-methyl-D-erythritol from CTP and 2-C-methyl-D-erythritol 4-phosphate (MEP). This chain is 2-C-methyl-D-erythritol 4-phosphate cytidylyltransferase, found in Thermotoga petrophila (strain ATCC BAA-488 / DSM 13995 / JCM 10881 / RKU-1).